We begin with the raw amino-acid sequence, 161 residues long: Endoribonuclease YbeY (161 aa).

The Zn(2+) site is built by H127, H131, and H137.

The protein belongs to the endoribonuclease YbeY family. Zn(2+) serves as cofactor.

The protein localises to the cytoplasm. Its function is as follows. Single strand-specific metallo-endoribonuclease involved in late-stage 70S ribosome quality control and in maturation of the 3' terminus of the 16S rRNA. This is Endoribonuclease YbeY from Listeria monocytogenes serotype 4b (strain CLIP80459).